The sequence spans 212 residues: Floral homeotic protein PMADS 2 (212 aa).

In terms of domain architecture, MADS-box spans 3–58; the sequence is RGKIEIKRIENSSNRQVTYSKRRNGIIKKAKEITVLCDAKVSLIIFGNSGKMHEYC. The K-box domain maps to 84–170; that stretch reads HENLSNEIDR…QYALHQKEMA (87 aa).

Predominantly expressed in petals and stamens, less in carpels and sepals.

Its subcellular location is the nucleus. Transcription factor involved in the genetic control of flower development. This chain is Floral homeotic protein PMADS 2 (PMADS2), found in Petunia hybrida (Petunia).